A 400-amino-acid chain; its full sequence is NAD-dependent protein deacetylase sirtuin-7 (400 aa).

The segment at methionine 1 to glutamate 27 is disordered. Basic and acidic residues predominate over residues arginine 8–glutamate 27. One can recognise a Deacetylase sirtuin-type domain in the interval proline 82–glutamate 329. NAD(+)-binding positions include glycine 107–tryptophan 126 and glutamine 167–aspartate 170. The active-site Proton acceptor is histidine 187. The Zn(2+) site is built by cysteine 195, cysteine 198, cysteine 225, and cysteine 228. Residues glycine 268 to serine 270, asparagine 297 to glutamine 299, and cysteine 315 contribute to the NAD(+) site. The tract at residues serine 354–proline 380 is disordered. The residue at position 388 (arginine 388) is an Asymmetric dimethylarginine; alternate. Position 388 is an omega-N-methylarginine; alternate (arginine 388).

The protein belongs to the sirtuin family. Class IV subfamily. As to quaternary structure, interacts with UBTF and the RNA polymerase I complex. Interacts with components of the B-WICH complex, such as MYBBP1A, SMARCA5/SNF2H and BAZ1B/WSTF. Interacts with ELK4, leading to stabilization at target promoters for H3K18Ac deacetylation. Interacts with histone H2A and/or histone H2B. Interacts with DNMT1. Interacts with SIRT1. Zn(2+) is required as a cofactor. Post-translationally, phosphorylated during mitosis. In terms of processing, methylation at Arg-388 by PRMT6 inhibits the H3K18Ac histone deacetylase activity, promoting mitochondria biogenesis and maintaining mitochondria respiration. Ubiquitinated via 'Lys-63'-linked ubiquitin chains. Deubiquitinated by USP7, inhibiting the H3K18Ac histone deacetylase activity and regulating gluconeogenesis. Ubiquitinated by E3 ubiquitin-protein ligase complex containing FBXO7; leading to proteasomal degradation.

The protein localises to the nucleus. Its subcellular location is the nucleolus. It localises to the nucleoplasm. It is found in the chromosome. The protein resides in the cytoplasm. The enzyme catalyses N(6)-acetyl-L-lysyl-[protein] + NAD(+) + H2O = 2''-O-acetyl-ADP-D-ribose + nicotinamide + L-lysyl-[protein]. The catalysed reaction is N(6)-glutaryl-L-lysyl-[protein] + NAD(+) + H2O = 2''-O-glutaryl-ADP-D-ribose + nicotinamide + L-lysyl-[protein]. It carries out the reaction N(6)-succinyl-L-lysyl-[protein] + NAD(+) + H2O = 2''-O-succinyl-ADP-D-ribose + nicotinamide + L-lysyl-[protein]. It catalyses the reaction N(6)-propanoyl-L-lysyl-[protein] + NAD(+) + H2O = 3''-O-propanoyl-ADP-D-ribose + nicotinamide + L-lysyl-[protein]. The enzyme catalyses N(6)-decanoyl-L-lysyl-[protein] + NAD(+) + H2O = 2''-O-decanoyl-ADP-D-ribose + nicotinamide + L-lysyl-[protein]. Its activity is regulated as follows. NAD-dependent protein-lysine deacetylase and deacylase activities are activated by nucleic acids. Histone deacetylase activity is activated by DNA and nucleosomes. Protein-lysine deacylase activity is activated by RNA. H3K18Ac histone deacetylase activity is inhibited by methylation at Arg-388. H3K18Ac histone deacetylase activity is inhibited by deubiquitination by USP7. Functionally, NAD-dependent protein-lysine deacylase that can act both as a deacetylase or deacylase (desuccinylase, depropionylase, deglutarylase and dedecanoylase), depending on the context. Specifically mediates deacetylation of histone H3 at 'Lys-18' (H3K18Ac). In contrast to other histone deacetylases, displays strong preference for a specific histone mark, H3K18Ac, directly linked to control of gene expression. H3K18Ac is mainly present around the transcription start site of genes and has been linked to activation of nuclear hormone receptors; SIRT7 thereby acts as a transcription repressor. Moreover, H3K18 hypoacetylation has been reported as a marker of malignancy in various cancers and seems to maintain the transformed phenotype of cancer cells. Also able to mediate deacetylation of histone H3 at 'Lys-36' (H3K36Ac) in the context of nucleosomes. Also mediates deacetylation of non-histone proteins, such as ATM, CDK9, DDX21, DDB1, FBL, FKBP5/FKBP51, GABPB1, RAN, RRP9/U3-55K and POLR1E/PAF53. Enriched in nucleolus where it stimulates transcription activity of the RNA polymerase I complex. Acts by mediating the deacetylation of the RNA polymerase I subunit POLR1E/PAF53, thereby promoting the association of RNA polymerase I with the rDNA promoter region and coding region. In response to metabolic stress, SIRT7 is released from nucleoli leading to hyperacetylation of POLR1E/PAF53 and decreased RNA polymerase I transcription. Required to restore the transcription of ribosomal RNA (rRNA) at the exit from mitosis. Promotes pre-ribosomal RNA (pre-rRNA) cleavage at the 5'-terminal processing site by mediating deacetylation of RRP9/U3-55K, a core subunit of the U3 snoRNP complex. Mediates 'Lys-37' deacetylation of Ran, thereby regulating the nuclear export of NF-kappa-B subunit RELA/p65. Acts as a regulator of DNA damage repair by mediating deacetylation of ATM during the late stages of DNA damage response, promoting ATM dephosphorylation and deactivation. Suppresses the activity of the DCX (DDB1-CUL4-X-box) E3 ubiquitin-protein ligase complexes by mediating deacetylation of DDB1, which prevents the interaction between DDB1 and CUL4 (CUL4A or CUL4B). Activates RNA polymerase II transcription by mediating deacetylation of CDK9, thereby promoting 'Ser-2' phosphorylation of the C-terminal domain (CTD) of RNA polymerase II. Deacetylates FBL, promoting histone-glutamine methyltransferase activity of FBL. Acts as a regulator of mitochondrial function by catalyzing deacetylation of GABPB1. Regulates Akt/AKT1 activity by mediating deacetylation of FKBP5/FKBP51. Required to prevent R-loop-associated DNA damage and transcription-associated genomic instability by mediating deacetylation and subsequent activation of DDX21, thereby overcoming R-loop-mediated stalling of RNA polymerases. In addition to protein deacetylase activity, also acts as a protein-lysine deacylase. Acts as a protein depropionylase by mediating depropionylation of Osterix (SP7), thereby regulating bone formation by osteoblasts. Acts as a histone deglutarylase by mediating deglutarylation of histone H4 on 'Lys-91' (H4K91glu); a mark that destabilizes nucleosomes by promoting dissociation of the H2A-H2B dimers from nucleosomes. Acts as a histone desuccinylase: in response to DNA damage, recruited to DNA double-strand breaks (DSBs) and catalyzes desuccinylation of histone H3 on 'Lys-122' (H3K122succ), thereby promoting chromatin condensation and DSB repair. Also promotes DSB repair by promoting H3K18Ac deacetylation, regulating non-homologous end joining (NHEJ). Along with its role in DNA repair, required for chromosome synapsis during prophase I of female meiosis by catalyzing H3K18Ac deacetylation. Involved in transcriptional repression of LINE-1 retrotransposon via H3K18Ac deacetylation, and promotes their association with the nuclear lamina. Required to stabilize ribosomal DNA (rDNA) heterochromatin and prevent cellular senescence induced by rDNA instability. Acts as a negative regulator of SIRT1 by preventing autodeacetylation of SIRT1, restricting SIRT1 deacetylase activity. This chain is NAD-dependent protein deacetylase sirtuin-7, found in Homo sapiens (Human).